The chain runs to 23 residues: Acidic phospholipase A2 Ts-A5 (23 aa).

The cofactor is Ca(2+). Post-translationally, contains 7 disulfide bonds. Expressed by the venom gland.

It localises to the secreted. It carries out the reaction a 1,2-diacyl-sn-glycero-3-phosphocholine + H2O = a 1-acyl-sn-glycero-3-phosphocholine + a fatty acid + H(+). Functionally, snake venom phospholipase A2 (PLA2) that shows a moderate inhibition of ADP-induced human platelet aggregation when tested on platelet rich plasma. Exhibits high hydrolytic activities and prefers the anionic micelles (dPPC with deoxycholate) to the zwitterionic micelles (dPPC with Triton X-100). PLA2 catalyzes the calcium-dependent hydrolysis of the 2-acyl groups in 3-sn-phosphoglycerides. In Trimeresurus stejnegeri (Chinese green tree viper), this protein is Acidic phospholipase A2 Ts-A5.